The primary structure comprises 315 residues: Taste receptor type 2 member 129 (315 aa).

The Extracellular portion of the chain corresponds to M1–S9. Residues A10–V30 form a helical membrane-spanning segment. The Cytoplasmic segment spans residues N31–Q46. Residues I47–L67 form a helical membrane-spanning segment. The Extracellular segment spans residues A68–A101. A helical membrane pass occupies residues C102–L122. Topologically, residues K123–K128 are cytoplasmic. The chain crosses the membrane as a helical span at residues V129–N149. The Extracellular segment spans residues S150 to C185. Residue N170 is glycosylated (N-linked (GlcNAc...) asparagine). Residues I186–L206 form a helical membrane-spanning segment. Residues W207–Q233 are Cytoplasmic-facing. A helical transmembrane segment spans residues T234 to W254. Residues R255–R266 are Extracellular-facing. A helical membrane pass occupies residues F267 to D287. Residues T288 to R315 lie on the Cytoplasmic side of the membrane.

It belongs to the G-protein coupled receptor T2R family.

The protein resides in the membrane. Functionally, putative taste receptor which may play a role in the perception of bitterness. The chain is Taste receptor type 2 member 129 from Rattus norvegicus (Rat).